Here is a 587-residue protein sequence, read N- to C-terminus: MYRLISSIASKARVARNCTSQIGSRLSSTRNYAAKDIRFGVEGRALMLRGVEELADAVKVTIPPKGRNVIIEQSWGAPKVTKDGVTVAKSIEFKDRVKNVGASLVKQVANRPTQLNRCLGDGTTCATVLTRAIFTEGCKSVAAGMNAMDLRRGIKLAVDTVVTKLKSRARMISTSEEIAQVGTISANGDRELVTDCKAMESVGKEGVITIQDGKTLFNELEVVEGMKIDRGYISPYFITNQKNQKCELEDPLILIHEKKISNLNSMVKVLELALKSQRSLLIVAADLESDALAVLILNKLRAGIKVCAVKAPGFGENRKANMHDLATLTGAQVITEELGMNLEKIDLSMLGNCKKITVSKDDTVFLGWGAGDKKAIGERCEQIRSMVEASESDYDKEKLQERLAKLSGGVAVLKIGGASESEVGEKKDRVTDALNATKAAVEEGIVPGGGVALLYASKELDKLSTANFDHKIGVQIIQNALKTPVYTIASNAGVEGAVIVGKLLESDNPDLGYDAAKGEYVDMVKSGIIDPVKVIRTALVDAASVSSLLTTTEAVVTEIPTKEDASPAMGGGGGGMGGMGGMGGMGF.

The N-terminal 32 residues, 1–32 (MYRLISSIASKARVARNCTSQIGSRLSSTRNY), are a transit peptide targeting the mitochondrion.

It belongs to the chaperonin (HSP60) family.

It localises to the mitochondrion. Functionally, implicated in mitochondrial protein import and macromolecular assembly. May facilitate the correct folding of imported proteins. May also prevent misfolding and promote the refolding and proper assembly of unfolded polypeptides generated under stress conditions in the mitochondrial matrix. In Brassica napus (Rape), this protein is Chaperonin CPN60, mitochondrial.